We begin with the raw amino-acid sequence, 255 residues long: Imidazole glycerol phosphate synthase subunit HisF (255 aa).

Catalysis depends on residues D12 and D131.

Belongs to the HisA/HisF family. As to quaternary structure, heterodimer of HisH and HisF.

The protein resides in the cytoplasm. The catalysed reaction is 5-[(5-phospho-1-deoxy-D-ribulos-1-ylimino)methylamino]-1-(5-phospho-beta-D-ribosyl)imidazole-4-carboxamide + L-glutamine = D-erythro-1-(imidazol-4-yl)glycerol 3-phosphate + 5-amino-1-(5-phospho-beta-D-ribosyl)imidazole-4-carboxamide + L-glutamate + H(+). The protein operates within amino-acid biosynthesis; L-histidine biosynthesis; L-histidine from 5-phospho-alpha-D-ribose 1-diphosphate: step 5/9. IGPS catalyzes the conversion of PRFAR and glutamine to IGP, AICAR and glutamate. The HisF subunit catalyzes the cyclization activity that produces IGP and AICAR from PRFAR using the ammonia provided by the HisH subunit. The sequence is that of Imidazole glycerol phosphate synthase subunit HisF from Salinispora tropica (strain ATCC BAA-916 / DSM 44818 / JCM 13857 / NBRC 105044 / CNB-440).